Here is a 480-residue protein sequence, read N- to C-terminus: Initiation-specific alpha-1,6-mannosyltransferase (480 aa).

The Cytoplasmic portion of the chain corresponds to 1-15 (MSRKLSHLIATRKSK). The helical; Signal-anchor for type II membrane protein transmembrane segment at 16 to 30 (TIVVTVLLIYSLLTF) threads the bilayer. Residues 31-480 (HLSNKRLLSQ…EDADKNAGHK (450 aa)) lie on the Lumenal side of the membrane. The short motif at 187–189 (DMD) is the DXD motif element. 4 N-linked (GlcNAc...) asparagine glycosylation sites follow: N203, N281, N341, and N393.

It belongs to the glycosyltransferase 32 family. Mn(2+) is required as a cofactor. Glycosylated.

Its subcellular location is the endoplasmic reticulum membrane. It localises to the golgi apparatus membrane. It carries out the reaction Transfers an alpha-D-mannosyl residue from GDP-mannose into lipid-linked oligosaccharide, forming an alpha-(1-&gt;6)-D-mannosyl-D-mannose linkage.. Its function is as follows. Mannosyltransferase involved in outer chain elongation of asparagine-linked oligosaccharides of the type Man(9)GlcNAc(2). Adds the first alpha-1,6-mannose to the Man(8)GlcNAc(2) and Man(9)GlcNAc(2), but not Man(5)GlcNAc(2), endoplasmic reticulum intermediates. Represents the first enzymatic event required for synthesis of outer chain mannose linkages on yeast secretory proteins. Also has the potential to transfer a second alpha-1,6-mannose to the Man(8)GlcNAc(2) core oligosaccharide. The chain is Initiation-specific alpha-1,6-mannosyltransferase from Saccharomyces cerevisiae (strain ATCC 204508 / S288c) (Baker's yeast).